A 90-amino-acid polypeptide reads, in one-letter code: Chromosomal protein MC1c (90 aa).

In terms of biological role, protects DNA against thermal denaturation and modulates transcription. The protein is Chromosomal protein MC1c of Methanothrix soehngenii (Methanosaeta concilii).